Here is a 393-residue protein sequence, read N- to C-terminus: (S)-mandelate dehydrogenase (393 aa).

An FMN hydroxy acid dehydrogenase domain is found at 1 to 377; the sequence is MSQNLFNVED…SPDYLQNEGV (377 aa). Y26 is a (S)-mandelate binding site. FMN-binding positions include 79–81, S108, and Q129; that span reads PTG. (S)-mandelate is bound at residue Y131. T156 is a binding site for FMN. R165 lines the (S)-mandelate pocket. K250 is a binding site for FMN. (S)-mandelate is bound by residues H274 and R277. The active-site Proton acceptor is H274. FMN is bound by residues 303–307 and 326–327; these read DSGFR and GR.

Belongs to the FMN-dependent alpha-hydroxy acid dehydrogenase family. As to quaternary structure, homotetramer. FMN serves as cofactor.

The protein resides in the cell inner membrane. The enzyme catalyses (S)-mandelate + A = phenylglyoxylate + AH2. It participates in aromatic compound metabolism; (R)-mandelate degradation; benzoate from (R)-mandelate: step 2/4. Functionally, catalyzes the dehydrogenation of (S)-mandelate to phenylglyoxylate (benzoylformate). Is likely involved in the utilization of mandelate as a sole source of carbon and energy for growth. Active in vitro with the artificial electron acceptors 2,6-dichlorophenolindophenol (DCPIP) or ferricyanide, but in vivo most likely transfer the electron pair from the reduced flavin to a component of the electron transport chain in the membrane, possibly a quinone. Shows very low activity with oxygen as the electron acceptor, and also with 3-indolelactate and medium chain 2-hydroxyacids as substrates. The protein is (S)-mandelate dehydrogenase of Pseudomonas putida (Arthrobacter siderocapsulatus).